A 483-amino-acid polypeptide reads, in one-letter code: Regulatory protein ViaA (483 aa).

It belongs to the ViaA family. As to quaternary structure, homodimer. Interacts with RavA.

The protein resides in the cytoplasm. Functionally, component of the RavA-ViaA chaperone complex, which may act on the membrane to optimize the function of some of the respiratory chains. ViaA stimulates the ATPase activity of RavA. The sequence is that of Regulatory protein ViaA from Escherichia coli O81 (strain ED1a).